The following is a 555-amino-acid chain: Glutamate--tRNA ligase (555 aa).

Positions 100–110 (PNPSGPLHIGH) match the 'HIGH' region motif.

This sequence belongs to the class-I aminoacyl-tRNA synthetase family. Glutamate--tRNA ligase type 2 subfamily.

It is found in the cytoplasm. The catalysed reaction is tRNA(Glu) + L-glutamate + ATP = L-glutamyl-tRNA(Glu) + AMP + diphosphate. Catalyzes the attachment of glutamate to tRNA(Glu) in a two-step reaction: glutamate is first activated by ATP to form Glu-AMP and then transferred to the acceptor end of tRNA(Glu). This Methanococcus maripaludis (strain C6 / ATCC BAA-1332) protein is Glutamate--tRNA ligase.